Reading from the N-terminus, the 257-residue chain is Zinc finger protein 8 (257 aa).

3 disordered regions span residues 48-92 (GDNS…NNNN), 108-128 (QALGGHQNAHKRERQHAKRGS), and 214-238 (GVYSSSPASAFRSHEQETNKEPNNW). The span at 50–65 (NSDNLSAEPSDHQTTT) shows a compositional bias: polar residues. The segment covering 66–92 (KNDESSENIKDKDKEKDKDKDKDNNNN) has biased composition (basic and acidic residues). A C2H2-type zinc finger spans residues 95 to 117 (FECHYCFRNFPTSQALGGHQNAH). The segment covering 115 to 126 (NAHKRERQHAKR) has biased composition (basic residues).

In terms of tissue distribution, expressed in developing cauline leaves.

It localises to the nucleus. Its function is as follows. Probable transcription factor required for the initiation of inflorescence trichomes in response to gibberellin and cytokinin. Is not involved in the regulation of trichome branching. Is functionally equivalent to GIS2. Acts as a negative regulator of abscisic acid (ABA) signaling during germination and early seedling development. In Arabidopsis thaliana (Mouse-ear cress), this protein is Zinc finger protein 8.